Here is a 448-residue protein sequence, read N- to C-terminus: Homogentisate 1,2-dioxygenase (448 aa).

His303 serves as the catalytic Proton acceptor. Residues His346 and Glu352 each contribute to the Fe cation site. Tyr361 and His382 together coordinate homogentisate. Residue His382 participates in Fe cation binding.

Belongs to the homogentisate dioxygenase family. Hexamer; dimer of trimers. It depends on Fe cation as a cofactor.

The enzyme catalyses homogentisate + O2 = 4-maleylacetoacetate + H(+). Its pathway is amino-acid degradation; L-phenylalanine degradation; acetoacetate and fumarate from L-phenylalanine: step 4/6. Its function is as follows. Involved in the catabolism of homogentisate (2,5-dihydroxyphenylacetate or 2,5-OH-PhAc), a central intermediate in the degradation of phenylalanine and tyrosine. Catalyzes the oxidative ring cleavage of the aromatic ring of homogentisate to yield maleylacetoacetate. This is Homogentisate 1,2-dioxygenase from Bradyrhizobium diazoefficiens (strain JCM 10833 / BCRC 13528 / IAM 13628 / NBRC 14792 / USDA 110).